The following is a 211-amino-acid chain: UPF0637 protein Bsph_1379 (211 aa).

It belongs to the UPF0637 family.

The sequence is that of UPF0637 protein Bsph_1379 from Lysinibacillus sphaericus (strain C3-41).